Here is a 492-residue protein sequence, read N- to C-terminus: WD repeat-containing protein JIP5 (492 aa).

WD repeat units follow at residues 127–166 (RHKG…VVKK), 178–217 (KKND…LSNS), 236–274 (RSAY…ILIS), 276–317 (DQED…LEDQ), and 365–405 (RNHN…VEEN). Acidic residues-rich tracts occupy residues 404 to 414 (ENASVESDSDE) and 422 to 433 (DLSDDTSSDDET). The disordered stretch occupies residues 404-472 (ENASVESDSD…SKSVKKRKIM (69 aa)). A compositionally biased stretch (basic and acidic residues) spans 449-462 (KDLKEDHQEEKESN).

The protein belongs to the WD repeat WDR55 family. As to quaternary structure, interacts with BRE1, BUD27 and GIS1.

It localises to the nucleus. Its subcellular location is the nucleolus. The chain is WD repeat-containing protein JIP5 (JIP5) from Saccharomyces cerevisiae (strain YJM789) (Baker's yeast).